We begin with the raw amino-acid sequence, 347 residues long: UDP-N-acetylenolpyruvoylglucosamine reductase (347 aa).

Residues Leu23–Ala197 form the FAD-binding PCMH-type domain. Arg174 is an active-site residue. The Proton donor role is filled by Ser247. Glu343 is a catalytic residue.

The protein belongs to the MurB family. It depends on FAD as a cofactor.

The protein resides in the cytoplasm. The catalysed reaction is UDP-N-acetyl-alpha-D-muramate + NADP(+) = UDP-N-acetyl-3-O-(1-carboxyvinyl)-alpha-D-glucosamine + NADPH + H(+). It functions in the pathway cell wall biogenesis; peptidoglycan biosynthesis. In terms of biological role, cell wall formation. The polypeptide is UDP-N-acetylenolpyruvoylglucosamine reductase (Azoarcus sp. (strain BH72)).